We begin with the raw amino-acid sequence, 325 residues long: Heat-inducible transcription repressor HrcA (325 aa).

It belongs to the HrcA family.

Its function is as follows. Negative regulator of class I heat shock genes (grpE-dnaK-dnaJ and groELS operons). Prevents heat-shock induction of these operons. The sequence is that of Heat-inducible transcription repressor HrcA from Staphylococcus aureus (strain USA300).